A 2034-amino-acid polypeptide reads, in one-letter code: MWMLAVALLHSISHGILTENFLSHHAFPSLLLSLHFSHPSVFSEDLHASLYFVNASLQEVVFASTTGTLVPCPAAGIPPVTLRWYLATGEEIYDVPGIRHVHPNGTLQIFPFPPSSFNNLIHDNTYYCTAENPSGKIRSQDVHIKAVLREPYTVRVEDQKAMRGNVAVFKCIIPSSVEAYITVVSWEKDTVSLVSGPRFLITSTGALYILDVQNEDGLYNYRCITRHRYTGETRQSNSARLFVSDPANSAPSILDGFDHRKAMAGQRVELPCKASGHPTPKYRWLKDNIPWEPDSRFRQTVTGLLIENTRPSDSGNYVCEVWNNYGTAEMIGRLYVKQPLKATISPRKVKSSVGSQVSLSCSVTGTEDQELSWYRNGEIINPGNNVRITGINRENLIMDGMAKSDGGAYQCFVRKDKMSAQDYVQVILEDGTPKIISAFSEKVVSPGEPVSLMCNVKGTPLPTITWTLDEDPIVKDGSHRISQIITSEGNVVSYLNISNTQVRDGGVYRCTANNSAGVVLYQARINVRGPASIRPMKNITAIAGRDTYIHCRVIGYPYYSIKWYKNSNLLPFNHRQVAFENNGTLKLSDVQKEVDEGEYTCNVLVQPQLSTSQSVHVTVKVPPFIQPFEFPRFSIGQRVFIPCVVVSGDLPITITWQKDGRPIPASLGVTIDNIDFTSSLRISNLSLMHNGNYTCIARNDAAAVEHQSQLIVRVPPRFVVQPSDQDGIYGKAVILNCSAEGYPVPTIVWKYSKGAGVPQFQPIALNGRIQLLTNGSLLIKHVLEEDSGYYLCKVSNDVGADVSKSMYLTVKIPAMITSYPNTTLATQGQKKEMSCTAHGEKPIIVRWEKEDRIINPEMSRYLVSTKEVGDEVISTLQILPTVREDSGFFSCHAINSYGEDRGIIQLTVQEPPDPPEIEIREVRARSIALRWTMGFDGNSPITGYDIECKNKSDSWDSVQRTKDVSPQLNQATIIDLHPSSTYNIRMYAKNRIGKSEASNELTITTDEAAPDGPPQDVQLEPISSQSIRVTWKAPKKHLQNGIIRGYQIGYREYSAGGNFQFNIISIDTTGDSEVYTLNNLKKFTQYGMVVQACNRAGIGPSSQEIITTTLEDVPSCPPGNVQATATSPETISISWSTLAKETLNGILQGFRVIYWANLLDGELGEIRNVTTTQPSLELDGLEKYTNYSIQVLAFTRAGDGVRSEQIFTRTKEDVPGPPAGVKAAASSASTVFVSWLPPLKLNGIIRKYTVFCSHPYPTVISEFEASPDSFSYRIPNLSRNRQYSVWVVAVTAAGRGNSSEIITVEPLAKAPARILTFSGTVTTPWMKDIVLPCKAVGDPAPTVKWMKDSNGTPSLVMIDGRRSIFSNGSFVIRTVKAEDSGYYSCVASNNWGSDEIILNLQVQVPPDQPRLTVSKTTSSSITLSWIPGDNGGSSIRGYILQYSEDNSEQWGSFPISPSERSYRLETLKCGTWYKFTLTAQNGVGPGRISEIIEAKTLGKEPQFSKEQELFASINTTRVRLNLIGWNDGGCPITSFTLEYRPFGTTVWTTAQRTSLSKSYILYDLQEATWYELQMRVCNSAGCAEKQAKFATLNYDGSTIPPLIKSVVQSEEGLATNEGLKMLVTISCILVGVLLLFVMLLIVRRRRREQRLKRLRDAKSLAEMLMSKNTRTSDTLNKQQQTLRMHIDIPRAQLLIEERDTMETIDDRSTVLLTDADFGETSKQKSLTVTHTVHYQSVSQATGPLVDVSDARPGTNPTTRRSAKTGPTARNRYASQWTLNRPHPTISAHTLTTDWRLPTPRPAGSVDKESDSYSVSPSQDTDRARSSMVSTESASSTYEELARAYEHAKMEEQLRHAKFTITECFISDTSSEQLTAGTNDYTDSLTSSTPSESGICRFTASPPKPQDGGRVMNMAVPKAHRPGDLVHLPPYLRMDFLLNRGAQGASRDLGLGQACLEPQKSRTLKRPTVLEPIPMEASSTREAQSWQPGAVATLPQREGAELGQAAKMSSSQESLLDSRGHLKGNNPYAKSYTLV.

An N-terminal signal peptide occupies residues 1 to 18 (MWMLAVALLHSISHGILT). Residues 19-1621 (ENFLSHHAFP…GLATNEGLKM (1603 aa)) lie on the Extracellular side of the membrane. 9 consecutive Ig-like C2-type domains span residues 39-145 (PSVF…VHIK), 151-242 (PYTV…ARLF), 251-321 (PSIL…VCEV), 339-427 (PLKA…VQVI), 433-526 (PKII…ARIN), 530-618 (PASI…VHVT), 622-711 (PPFI…SQLI), 716-809 (PRFV…MYLT), and 813-909 (PAMI…LTVQ). 2 N-linked (GlcNAc...) asparagine glycosylation sites follow: N54 and N104. 5 disulfide bridges follow: C72–C128, C171–C223, C272–C319, C361–C411, and C454–C510. Residues N496, N513, N538, N582, N684, N692, N736, N774, and N821 are each glycosylated (N-linked (GlcNAc...) asparagine). Intrachain disulfides connect C551–C601 and C643–C695. A disulfide bridge connects residues C737 and C792. The cysteines at positions 835 and 891 are disulfide-linked. 4 Fibronectin type-III domains span residues 911–1008 (PPDP…TDEA), 1013–1112 (PPQD…TLED), 1117–1213 (PPGN…TKED), and 1217–1311 (PPAG…AKAP). N-linked (GlcNAc...) asparagine glycosylation occurs at N950. N-linked (GlcNAc...) asparagine glycans are attached at residues N1168, N1186, N1276, N1297, and N1367. An Ig-like C2-type 10 domain is found at 1311 to 1403 (PARILTFSGT…DEIILNLQVQ (93 aa)). C1333 and C1385 are disulfide-bonded. 2 Fibronectin type-III domains span residues 1405–1499 (PPDQ…TLGK) and 1500–1601 (EPQF…TIPP). N-linked (GlcNAc...) asparagine glycosylation is present at N1514. The chain crosses the membrane as a helical span at residues 1622–1642 (LVTISCILVGVLLLFVMLLIV). Residues 1643–2034 (RRRRREQRLK…NPYAKSYTLV (392 aa)) lie on the Cytoplasmic side of the membrane. 3 disordered regions span residues 1744–1833 (LVDV…TESA), 1882–1908 (DSLT…QDGG), and 2001–2034 (LGQA…YTLV). Residues 1882-1891 (DSLTSSTPSE) show a composition bias toward polar residues.

In terms of assembly, homodimer; mediates homophilic interactions to promote cell adhesion. In terms of tissue distribution, SDK1, SDK2, DSCAM and DSCAML1 are expressed in non-overlapping subsets of interneurons and retinal ganglion cells (RGCs) that form synapses in distinct inner plexiform layer (IPL) sublaminae.

It is found in the cell membrane. The protein resides in the cell projection. Its subcellular location is the axon. It localises to the synapse. In terms of biological role, cell adhesion molecule that plays a role in neuronal self-avoidance. Promotes repulsion between specific neuronal processes of either the same cell or the same subtype of cells. Mediates within retinal amacrine and ganglion cell subtypes both isoneuronal self-avoidance for creating an orderly dendritic arborization and heteroneuronal self-avoidance to maintain the mosaic spacing between amacrine and ganglion cell bodies. Receptor for netrin required for axon guidance independently of and in collaboration with the receptor DCC. Adhesion molecule that promotes lamina-specific synaptic connections in the retina: expressed in specific subsets of interneurons and retinal ganglion cells (RGCs) and promotes synaptic connectivity via homophilic interactions. The chain is Cell adhesion molecule DSCAM (DSCAM) from Gallus gallus (Chicken).